The sequence spans 273 residues: Peptidoglycan-N-acetylglucosamine deacetylase BC_1974 (273 aa).

Residues 10-30 form a helical membrane-spanning segment; the sequence is IVVVLIAIAAVAIGYYMFQSI. A NodB homology domain is found at 69–255; sequence KVAYLTFDDG…GLKEKGYEFE (187 aa). D76 (proton acceptor) is an active-site residue. Zn(2+) is bound by residues D77, H126, and H130. The active-site Proton donor is the H230.

It belongs to the polysaccharide deacetylase family. The cofactor is Zn(2+). It depends on Co(2+) as a cofactor. Ni(2+) serves as cofactor.

The protein resides in the cell membrane. The enzyme catalyses peptidoglycan-N-acetyl-D-glucosamine + H2O = peptidoglycan-D-glucosamine + acetate.. Its activity is regulated as follows. Inhibited by the hydroxamate N-hydroxy-4-(naphthalene-1-yl)benzamide (NHNB). Its function is as follows. Catalyzes the deacetylation of N-acetylglucosamine (GlcNAc) residues in peptidoglycan. This is Peptidoglycan-N-acetylglucosamine deacetylase BC_1974 from Bacillus cereus (strain ATCC 14579 / DSM 31 / CCUG 7414 / JCM 2152 / NBRC 15305 / NCIMB 9373 / NCTC 2599 / NRRL B-3711).